Reading from the N-terminus, the 570-residue chain is Sulfite reductase [NADPH] hemoprotein beta-component (570 aa).

The [4Fe-4S] cluster site is built by Cys-434, Cys-440, Cys-479, and Cys-483. Cys-483 is a siroheme binding site.

Belongs to the nitrite and sulfite reductase 4Fe-4S domain family. In terms of assembly, alpha(8)-beta(8). The alpha component is a flavoprotein, the beta component is a hemoprotein. Siroheme is required as a cofactor. Requires [4Fe-4S] cluster as cofactor.

The catalysed reaction is hydrogen sulfide + 3 NADP(+) + 3 H2O = sulfite + 3 NADPH + 4 H(+). Its pathway is sulfur metabolism; hydrogen sulfide biosynthesis; hydrogen sulfide from sulfite (NADPH route): step 1/1. Functionally, component of the sulfite reductase complex that catalyzes the 6-electron reduction of sulfite to sulfide. This is one of several activities required for the biosynthesis of L-cysteine from sulfate. The polypeptide is Sulfite reductase [NADPH] hemoprotein beta-component (Zymomonas mobilis subsp. mobilis (strain ATCC 31821 / ZM4 / CP4)).